The sequence spans 79 residues: Small ribosomal subunit protein bS18 (79 aa).

It belongs to the bacterial ribosomal protein bS18 family. As to quaternary structure, part of the 30S ribosomal subunit. Forms a tight heterodimer with protein bS6.

In terms of biological role, binds as a heterodimer with protein bS6 to the central domain of the 16S rRNA, where it helps stabilize the platform of the 30S subunit. This Rhodopseudomonas palustris (strain BisB5) protein is Small ribosomal subunit protein bS18.